The following is a 219-amino-acid chain: 3-dehydroquinate dehydratase (219 aa).

Residues 34–36 (ELR) and R63 contribute to the 3-dehydroquinate site. H114 serves as the catalytic Proton donor/acceptor. Catalysis depends on K139, which acts as the Schiff-base intermediate with substrate. Residues R174, T193, and Q197 each contribute to the 3-dehydroquinate site.

It belongs to the type-I 3-dehydroquinase family. Homodimer.

The catalysed reaction is 3-dehydroquinate = 3-dehydroshikimate + H2O. Its pathway is metabolic intermediate biosynthesis; chorismate biosynthesis; chorismate from D-erythrose 4-phosphate and phosphoenolpyruvate: step 3/7. Involved in the third step of the chorismate pathway, which leads to the biosynthesis of aromatic amino acids. Catalyzes the cis-dehydration of 3-dehydroquinate (DHQ) and introduces the first double bond of the aromatic ring to yield 3-dehydroshikimate. This is 3-dehydroquinate dehydratase from Sulfolobus acidocaldarius (strain ATCC 33909 / DSM 639 / JCM 8929 / NBRC 15157 / NCIMB 11770).